Reading from the N-terminus, the 259-residue chain is UPF0246 protein NGK_0633 (259 aa).

Belongs to the UPF0246 family.

In Neisseria gonorrhoeae (strain NCCP11945), this protein is UPF0246 protein NGK_0633.